Here is a 298-residue protein sequence, read N- to C-terminus: UDP-3-O-acyl-N-acetylglucosamine deacetylase (298 aa).

Residues His-75, His-232, and Asp-236 each contribute to the Zn(2+) site. The Proton donor role is filled by His-259.

This sequence belongs to the LpxC family. The cofactor is Zn(2+).

The catalysed reaction is a UDP-3-O-[(3R)-3-hydroxyacyl]-N-acetyl-alpha-D-glucosamine + H2O = a UDP-3-O-[(3R)-3-hydroxyacyl]-alpha-D-glucosamine + acetate. The protein operates within glycolipid biosynthesis; lipid IV(A) biosynthesis; lipid IV(A) from (3R)-3-hydroxytetradecanoyl-[acyl-carrier-protein] and UDP-N-acetyl-alpha-D-glucosamine: step 2/6. Catalyzes the hydrolysis of UDP-3-O-myristoyl-N-acetylglucosamine to form UDP-3-O-myristoylglucosamine and acetate, the committed step in lipid A biosynthesis. The protein is UDP-3-O-acyl-N-acetylglucosamine deacetylase of Nitratiruptor sp. (strain SB155-2).